The sequence spans 271 residues: MTDLKTIIEEAYQNKDSFTTDTVPKKIHQAIHQTIELLDNGELRIAEKQNGQWNTNEWAKMAILLYFKTEPLKTFDAGYTFFYDKIPLKYTNNTSQPQSGVRVVPHAIVRKGAYLAPNTVLMPSYINIGAYVDSGTLIDTWATVGSCAQIGKNVHLSGGAGIGGVLEPLQAHPTIIEDDCFIGARSEIVEGVMVEKGSVISMGVFVGQSTPIYNRQTQEITYGRIPAGSVVIPGSLPSKDGHYNRYSAIIVKQVDEKTRSKVSLNELLREG.

Positions 102 and 139 each coordinate substrate.

Belongs to the transferase hexapeptide repeat family. As to quaternary structure, homotrimer.

The protein localises to the cytoplasm. The catalysed reaction is (S)-2,3,4,5-tetrahydrodipicolinate + succinyl-CoA + H2O = (S)-2-succinylamino-6-oxoheptanedioate + CoA. The protein operates within amino-acid biosynthesis; L-lysine biosynthesis via DAP pathway; LL-2,6-diaminopimelate from (S)-tetrahydrodipicolinate (succinylase route): step 1/3. In Coxiella burnetii (strain Dugway 5J108-111), this protein is 2,3,4,5-tetrahydropyridine-2,6-dicarboxylate N-succinyltransferase.